A 245-amino-acid polypeptide reads, in one-letter code: 1-(5-phosphoribosyl)-5-[(5-phosphoribosylamino)methylideneamino] imidazole-4-carboxamide isomerase (245 aa).

The Proton acceptor role is filled by D7. Catalysis depends on D129, which acts as the Proton donor.

It belongs to the HisA/HisF family.

It localises to the cytoplasm. The enzyme catalyses 1-(5-phospho-beta-D-ribosyl)-5-[(5-phospho-beta-D-ribosylamino)methylideneamino]imidazole-4-carboxamide = 5-[(5-phospho-1-deoxy-D-ribulos-1-ylimino)methylamino]-1-(5-phospho-beta-D-ribosyl)imidazole-4-carboxamide. It participates in amino-acid biosynthesis; L-histidine biosynthesis; L-histidine from 5-phospho-alpha-D-ribose 1-diphosphate: step 4/9. In Shewanella amazonensis (strain ATCC BAA-1098 / SB2B), this protein is 1-(5-phosphoribosyl)-5-[(5-phosphoribosylamino)methylideneamino] imidazole-4-carboxamide isomerase.